The sequence spans 508 residues: Mitochondrial distribution and morphology protein 10 (508 aa).

Residues 160–195 (PAHPTSTRPTPPQTPPSHTRQPSEPSTPAPSPTPGN) form a disordered region.

This sequence belongs to the MDM10 family. As to quaternary structure, component of the ER-mitochondria encounter structure (ERMES) or MDM complex, composed of MMM1, MDM10, MDM12 and MDM34. Associates with the mitochondrial outer membrane sorting assembly machinery SAM(core) complex.

The protein localises to the mitochondrion outer membrane. Its function is as follows. Component of the ERMES/MDM complex, which serves as a molecular tether to connect the endoplasmic reticulum and mitochondria. Components of this complex are involved in the control of mitochondrial shape and protein biogenesis and may function in phospholipid exchange. MDM10 is involved in the late assembly steps of the general translocase of the mitochondrial outer membrane (TOM complex). Functions in the TOM40-specific route of the assembly of outer membrane beta-barrel proteins, including the association of TOM40 with the receptor TOM22 and small TOM proteins. Can associate with the SAM(core) complex as well as the MDM12-MMM1 complex, both involved in late steps of the major beta-barrel assembly pathway, that is responsible for biogenesis of all outer membrane beta-barrel proteins. May act as a switch that shuttles between both complexes and channels precursor proteins into the TOM40-specific pathway. Plays a role in mitochondrial morphology and in the inheritance of mitochondria. The chain is Mitochondrial distribution and morphology protein 10 from Cryptococcus neoformans var. neoformans serotype D (strain B-3501A) (Filobasidiella neoformans).